Here is a 151-residue protein sequence, read N- to C-terminus: Protein archease-like (151 aa).

Residues aspartate 20, aspartate 150, and isoleucine 151 each contribute to the Ca(2+) site.

The protein belongs to the archease family.

Component of the tRNA-splicing ligase complex required to facilitate the enzymatic turnover of catalytic subunit RtcB. This is Protein archease-like from Dictyostelium discoideum (Social amoeba).